A 214-amino-acid polypeptide reads, in one-letter code: Putative pyrophosphatase PpaX (214 aa).

The active-site Nucleophile is Asp8.

Belongs to the HAD-like hydrolase superfamily. PpaX family. It depends on Mg(2+) as a cofactor.

The enzyme catalyses diphosphate + H2O = 2 phosphate + H(+). The chain is Putative pyrophosphatase PpaX from Clostridium perfringens (strain 13 / Type A).